Here is a 519-residue protein sequence, read N- to C-terminus: Anthranilate synthase component 1 (519 aa).

L-tryptophan is bound by residues Thr40 and 293–295 (PYM). Residue 330 to 331 (GT) coordinates chorismate. Glu363 is a Mg(2+) binding site. Residues Tyr451, Arg471, 485-487 (GSG), and Gly487 contribute to the chorismate site. Mg(2+) is bound at residue Glu500.

It belongs to the anthranilate synthase component I family. Heterotetramer consisting of two non-identical subunits: a beta subunit (TrpG) and a large alpha subunit (TrpE). Mg(2+) is required as a cofactor.

The catalysed reaction is chorismate + L-glutamine = anthranilate + pyruvate + L-glutamate + H(+). It functions in the pathway amino-acid biosynthesis; L-tryptophan biosynthesis; L-tryptophan from chorismate: step 1/5. Its activity is regulated as follows. Feedback inhibited by tryptophan. Part of a heterotetrameric complex that catalyzes the two-step biosynthesis of anthranilate, an intermediate in the biosynthesis of L-tryptophan. In the first step, the glutamine-binding beta subunit (TrpG) of anthranilate synthase (AS) provides the glutamine amidotransferase activity which generates ammonia as a substrate that, along with chorismate, is used in the second step, catalyzed by the large alpha subunit of AS (TrpE) to produce anthranilate. In the absence of TrpG, TrpE can synthesize anthranilate directly from chorismate and high concentrations of ammonia. This is Anthranilate synthase component 1 (trpE) from Buchnera aphidicola subsp. Diuraphis noxia.